The sequence spans 294 residues: ATP phosphoribosyltransferase (294 aa).

The protein belongs to the ATP phosphoribosyltransferase family. Long subfamily. The cofactor is Mg(2+).

It localises to the cytoplasm. The catalysed reaction is 1-(5-phospho-beta-D-ribosyl)-ATP + diphosphate = 5-phospho-alpha-D-ribose 1-diphosphate + ATP. It participates in amino-acid biosynthesis; L-histidine biosynthesis; L-histidine from 5-phospho-alpha-D-ribose 1-diphosphate: step 1/9. Its activity is regulated as follows. Feedback inhibited by histidine. Catalyzes the condensation of ATP and 5-phosphoribose 1-diphosphate to form N'-(5'-phosphoribosyl)-ATP (PR-ATP). Has a crucial role in the pathway because the rate of histidine biosynthesis seems to be controlled primarily by regulation of HisG enzymatic activity. The protein is ATP phosphoribosyltransferase of Chlorobaculum parvum (strain DSM 263 / NCIMB 8327) (Chlorobium vibrioforme subsp. thiosulfatophilum).